Consider the following 208-residue polypeptide: Small ribosomal subunit protein uS4 (208 aa).

The S4 RNA-binding domain occupies 95–157; the sequence is RRIDNIVYRA…DSLKKLVRSN (63 aa).

This sequence belongs to the universal ribosomal protein uS4 family. Part of the 30S ribosomal subunit. Contacts protein S5. The interaction surface between S4 and S5 is involved in control of translational fidelity.

One of the primary rRNA binding proteins, it binds directly to 16S rRNA where it nucleates assembly of the body of the 30S subunit. In terms of biological role, with S5 and S12 plays an important role in translational accuracy. In Borrelia duttonii (strain Ly), this protein is Small ribosomal subunit protein uS4.